Reading from the N-terminus, the 295-residue chain is Putative F-box protein At5g44220 (295 aa).

One can recognise an F-box domain in the interval 56 to 102; the sequence is STNSDLLPMDLIKEILKRLPAKTLARFLCVSKLWSSIIRSRDLMKLF.

The sequence is that of Putative F-box protein At5g44220 from Arabidopsis thaliana (Mouse-ear cress).